Reading from the N-terminus, the 36-residue chain is Adenylate kinase (36 aa).

10–15 (GAGKGT) serves as a coordination point for ATP. Residues 30–36 (ATGDLFR) are NMP. The AMP site is built by T31 and R36.

It belongs to the adenylate kinase family. Monomer.

The protein localises to the cytoplasm. The catalysed reaction is AMP + ATP = 2 ADP. Its pathway is purine metabolism; AMP biosynthesis via salvage pathway; AMP from ADP: step 1/1. Catalyzes the reversible transfer of the terminal phosphate group between ATP and AMP. Plays an important role in cellular energy homeostasis and in adenine nucleotide metabolism. The sequence is that of Adenylate kinase (adk) from Streptomyces griseus.